The following is a 371-amino-acid chain: MIRIAVDAMGGDVGPDVTVPASLAFLSGHPEAALVLVGQPDVLAAHPQYALLQSHPRCQFVAASEVVTMDDPIEIALRRKKNSSMRVAMNQVKEGVAQAAVSAGNTGALMAIARYVLKTMEGIDRPAIATQLPNAAGGATTVLDLGANVDCTADHLLQFAVMGSALVAAISGKPAPSVGLLNIGEEAIKGSEIIKKAGDLLRSASISGDLNFYGNVEGNDIFKGTTDIVVCDGFVGNVALKASEGLASMIGGFIKAEFSRNILTKFAAIVAYPVLTAFKNRVDHRRYNGAALLGLQGLVFKSHGSADAFAFERALNRAYDAARNNLLERVRERIAHAAPLLLVAAQMAPASDGVSAVSSMAVDPAVSTPAH.

It belongs to the PlsX family. In terms of assembly, homodimer. Probably interacts with PlsY.

It localises to the cytoplasm. The catalysed reaction is a fatty acyl-[ACP] + phosphate = an acyl phosphate + holo-[ACP]. It functions in the pathway lipid metabolism; phospholipid metabolism. Its function is as follows. Catalyzes the reversible formation of acyl-phosphate (acyl-PO(4)) from acyl-[acyl-carrier-protein] (acyl-ACP). This enzyme utilizes acyl-ACP as fatty acyl donor, but not acyl-CoA. In Polaromonas sp. (strain JS666 / ATCC BAA-500), this protein is Phosphate acyltransferase.